A 518-amino-acid chain; its full sequence is Retinal dehydrogenase 2 (518 aa).

NAD(+)-binding positions include I184–W186, K210–E213, and S264–E266. E286 (proton acceptor) is an active-site residue. C320 serves as the catalytic Nucleophile. NAD(+) is bound by residues K366–K370 and E417.

Belongs to the aldehyde dehydrogenase family. In terms of assembly, homotetramer.

The protein localises to the cytoplasm. It carries out the reaction retinal + NAD(+) + H2O = retinoate + NADH + 2 H(+). The enzyme catalyses all-trans-retinal + NAD(+) + H2O = all-trans-retinoate + NADH + 2 H(+). It catalyses the reaction all-trans-13,14-dihydroretinal + NAD(+) + H2O = all-trans-13,14-dihydroretinoate + NADH + 2 H(+). The protein operates within cofactor metabolism; retinol metabolism. Functionally, catalyzes the NAD-dependent oxidation of aldehyde substrates, such as all-trans-retinal and all-trans-13,14-dihydroretinal, to their corresponding carboxylic acids, all-trans-retinoate and all-trans-13,14-dihydroretinoate, respectively. Retinoate signaling is critical for the transcriptional control of many genes, for instance it is crucial for initiation of meiosis in both male and female. Recognizes retinal as substrate, both in its free form and when bound to cellular retinol-binding protein. Lacks activity with benzaldehyde, acetaldehyde and octanal. Displays complete lack of activity with citral. In Gallus gallus (Chicken), this protein is Retinal dehydrogenase 2 (ALDH1A2).